A 1693-amino-acid chain; its full sequence is Non-structural polyprotein pORF1 (1693 aa).

One can recognise an Alphavirus-like MT domain in the interval 56-240 (VFRPEVFWNH…HDVSNLRSWI (185 aa)). The Y-domain stretch occupies residues 241–439 (RTTKVTGDHP…FYAQCRRWLS (199 aa)). Cysteine 434 and cysteine 481 form a disulfide bridge. The interval 442–509 (FHLDPRVLVF…EAYEGSDVDP (68 aa)) is protease. A zinc-binding region spans residues 510-691 (AESAISDISG…FSPGHVWESA (182 aa)). The Zn(2+) site is built by histidine 671, glutamate 673, and histidine 686. Residues 712–770 (SSPAQPDLGFISEPSIPSRAATLTPAAPLPPPAPDPSPTPSAPARGEPAPGATARAPAI) are hinge. A disordered region spans residues 732-768 (ATLTPAAPLPPPAPDPSPTPSAPARGEPAPGATARAP). Over residues 738 to 752 (APLPPPAPDPSPTPS) the composition is skewed to pro residues. Residues 775–921 (ARHRRLLFTY…LYLPELAARW (147 aa)) enclose the Macro domain. Positions 934 to 1082 (ITEDVARTAN…RPDLAPTSWW (149 aa)) constitute a (+)RNA virus helicase ATP-binding domain. Residues 960 to 1204 (GCRVTPGVVQ…ISDAIVNNFF (245 aa)) are NTPase/helicase. 975–982 (GVPGSGKS) is a binding site for ATP. Residues 1083 to 1216 (HVTHRCPADV…GGEIGHQRPS (134 aa)) form the (+)RNA virus helicase C-terminal domain. The tract at residues 1207 to 1693 (GGEIGHQRPS…LTNSILCRVE (487 aa)) is RNA-directed RNA polymerase. A RdRp catalytic domain is found at 1454 to 1565 (SMVFENDFSE…LCSEYRQSPG (112 aa)).

It belongs to the hepevirus non-structural polyprotein family. The protease domain interacts with host EIF2AK4 (via C-terminus); this interaction inhibits dimerization of EIF2AK4 and prevents EIF2AK4-mediated phosphorylation of host EIF2A. Mg(2+) serves as cofactor. In terms of processing, ORF1 polyprotein does not seem to be processed into distinct enzymatic domains by a viral protease belonging to ORF1, but could be processed by a host serine protease like thrombin.

Its subcellular location is the host cytoplasm. It is found in the host perinuclear region. The catalysed reaction is GTP + S-adenosyl-L-methionine = N(7)-methyl-GTP + S-adenosyl-L-homocysteine. It carries out the reaction RNA(n) + a ribonucleoside 5'-triphosphate = RNA(n+1) + diphosphate. Its activity is regulated as follows. Putative protease: Inhibited by chymostatin. Functionally, methyltransferase: Displays a capping enzyme activity. This function is necessary since all viral RNAs are synthesized in the cytoplasm, and host capping enzymes are restricted to the nucleus. The enzymatic reaction involves a covalent link between 7-methyl-GMP and the methyltransferase, whereas eukaryotic capping enzymes form a covalent complex only with GMP. Methyltransferase catalyzes transfer of a methyl group from S-adenosylmethionine to GTP and GDP to yield m(7)GTP or m(7)GDP. GDP is a better substrate than GTP. This enzyme also displays guanylyltransferase activity to form a covalent complex, methyltransferase-m(7)GMP, from which 7-methyl-GMP is transferred to the mRNA to create the cap structure. Y-domain: Indispensable for virus replication. Its function is as follows. Putative protease: The putative protease domain, although necessary for replication of the virus, may not be a protease but rather a structural Zn(2+)-binding domain. Inhibits induction of IFN-beta by MDA5 and RIG-I pathways and down-regulates the expression of MDA5. In terms of biological role, NTPase/helicase: Multi-functional protein that exhibits NTPase and RNA unwinding activities. Hydrolyzes all NTPs efficiently and unwinds RNA duplexes containing 5' overhangs. Possesses a sequence independent RNA-5'-triphosphatase (RTPase) activity suggestive of its role in forming viral cap structure. Also participates in viral genome replication, RNA translocation and genome packaging/unpackaging. Functionally, RNA-directed RNA polymerase: Plays an essential role in the virus replication. Binds to the 3'-end of the genomic RNA to initiate viral replication. This Homo sapiens (Human) protein is Non-structural polyprotein pORF1.